The primary structure comprises 154 residues: Myoglobin (154 aa).

The 147-residue stretch at 2–148 (GLSDQEWQHV…FRNDMASKYK (147 aa)) folds into the Globin domain. Histidine 65 lines the nitrite pocket. Histidine 65 contributes to the O2 binding site. Histidine 94 contributes to the heme b binding site.

In terms of assembly, monomeric.

It localises to the cytoplasm. The protein localises to the sarcoplasm. The catalysed reaction is Fe(III)-heme b-[protein] + nitric oxide + H2O = Fe(II)-heme b-[protein] + nitrite + 2 H(+). It carries out the reaction H2O2 + AH2 = A + 2 H2O. Its function is as follows. Monomeric heme protein which primary function is to store oxygen and facilitate its diffusion within muscle tissues. Reversibly binds oxygen through a pentacoordinated heme iron and enables its timely and efficient release as needed during periods of heightened demand. Depending on the oxidative conditions of tissues and cells, and in addition to its ability to bind oxygen, it also has a nitrite reductase activity whereby it regulates the production of bioactive nitric oxide. Under stress conditions, like hypoxia and anoxia, it also protects cells against reactive oxygen species thanks to its pseudoperoxidase activity. This chain is Myoglobin, found in Dromaius novaehollandiae (Emu).